Consider the following 762-residue polypeptide: 5-methyltetrahydropteroyltriglutamate--homocysteine methyltransferase (762 aa).

5-methyltetrahydropteroyltri-L-glutamate contacts are provided by residues 16–19 (RELK) and Lys-118. L-homocysteine-binding positions include 439–441 (IGS) and Glu-492. L-methionine contacts are provided by residues 439 to 441 (IGS) and Glu-492. 5-methyltetrahydropteroyltri-L-glutamate-binding positions include 523 to 524 (RC) and Trp-569. Asp-607 serves as a coordination point for L-homocysteine. Asp-607 is an L-methionine binding site. A 5-methyltetrahydropteroyltri-L-glutamate-binding site is contributed by Glu-613. Zn(2+) contacts are provided by His-649, Cys-651, and Glu-673. The Proton donor role is filled by His-702. Residue Cys-734 coordinates Zn(2+).

Belongs to the vitamin-B12 independent methionine synthase family. It depends on Zn(2+) as a cofactor.

It catalyses the reaction 5-methyltetrahydropteroyltri-L-glutamate + L-homocysteine = tetrahydropteroyltri-L-glutamate + L-methionine. It functions in the pathway amino-acid biosynthesis; L-methionine biosynthesis via de novo pathway; L-methionine from L-homocysteine (MetE route): step 1/1. Its function is as follows. Catalyzes the transfer of a methyl group from 5-methyltetrahydrofolate to homocysteine resulting in methionine formation. The sequence is that of 5-methyltetrahydropteroyltriglutamate--homocysteine methyltransferase from Pseudomonas entomophila (strain L48).